Reading from the N-terminus, the 245-residue chain is MKTTKKIAVITGANRGLGKGIAEELSNTNNITVIGTSTSQKGCKIINKYLKNNGIGIKLDITNPNEITKTMDFVYKNFGRVDILINNAGIIRDKLLINMKTQDWNSVLNVNLNSIFYMSKSVIRNMIKNKQGKIITIGSVIAHIGNCGQTNYSAAKLGLVGFHKSLALELAPKGITVNMIAPGLIKTGMTNNLSQKQLSKYLSKIPMKRLGTIKEISKITLFLISNDANYITGQVIHVNGGMYMP.

NADP(+) contacts are provided by residues Gly-12–Arg-15 and Thr-38. The Ca(2+) site is built by Lys-51 and Gly-54. Residues Asp-60–Ile-61 and Asn-87 each bind NADP(+). Ser-139 contacts substrate. Position 146 (Asn-146) interacts with Ca(2+). Catalysis depends on Tyr-152, which acts as the Proton acceptor. NADP(+) is bound by residues Tyr-152–Lys-156 and Ile-185. Positions 234 and 235 each coordinate Ca(2+).

Belongs to the short-chain dehydrogenases/reductases (SDR) family. In terms of assembly, homotetramer.

The catalysed reaction is a (3R)-hydroxyacyl-[ACP] + NADP(+) = a 3-oxoacyl-[ACP] + NADPH + H(+). It participates in lipid metabolism; fatty acid biosynthesis. In terms of biological role, catalyzes the NADPH-dependent reduction of beta-ketoacyl-ACP substrates to beta-hydroxyacyl-ACP products, the first reductive step in the elongation cycle of fatty acid biosynthesis. The chain is 3-oxoacyl-[acyl-carrier-protein] reductase FabG (fabG) from Buchnera aphidicola subsp. Baizongia pistaciae (strain Bp).